The primary structure comprises 345 residues: Platelet-derived growth factor C (345 aa).

A signal peptide spans 1–22; sequence MSLFGLLLLTSALAGQRQGTQA. 2 N-linked (GlcNAc...) asparagine glycosylation sites follow: asparagine 25 and asparagine 55. The region spanning 46 to 163 is the CUB domain; the sequence is HERIITVSTN…PGFCIHYNIV (118 aa). 4 cysteine pairs are disulfide-bonded: cysteine 104/cysteine 124, cysteine 250/cysteine 294, cysteine 280/cysteine 335, and cysteine 287/cysteine 337.

It belongs to the PDGF/VEGF growth factor family. In terms of assembly, homodimer; disulfide-linked. Interacts with PDGFRA homodimers, and with heterodimers formed by PDGFRA and PDGFRB. Interacts (via CUB domain) with PLAT (via kringle domain). In terms of processing, proteolytic removal of the N-terminal CUB domain releasing the core domain is necessary for unmasking the receptor-binding epitopes of the core domain. Cleavage after basic residues in the hinge region (region connecting the CUB and growth factor domains) gives rise to the receptor-binding form. Cleaved by PLAT and PLG. Post-translationally, sumoylated with SUMO1. N-glycosylated. As to expression, expressed in the fallopian tube, vascular smooth muscle cells in kidney, breast and colon and in visceral smooth muscle of the gastrointestinal tract. Highly expressed in retinal pigment epithelia. Expressed in medulloblastoma. In the kidney, constitutively expressed in parietal epithelial cells of Bowman's capsule, tubular epithelial cells and in arterial endothelial cells (at protein level). Highly expressed in the platelets, prostate, testis and uterus. Higher expression is observed in uterine leiomyomata. Weaker expression in the spleen, thymus, heart, pancreas, liver, ovary cells and small intestine, and negligible expression in the colon and peripheral blood leukocytes.

The protein localises to the cytoplasm. Its subcellular location is the cytosol. It is found in the secreted. The protein resides in the nucleus. It localises to the cytoplasmic granule. The protein localises to the cell membrane. Functionally, growth factor that plays an essential role in the regulation of embryonic development, cell proliferation, cell migration, survival and chemotaxis. Potent mitogen and chemoattractant for cells of mesenchymal origin. Required for normal skeleton formation during embryonic development, especially for normal development of the craniofacial skeleton and for normal development of the palate. Required for normal skin morphogenesis during embryonic development. Plays an important role in wound healing, where it appears to be involved in three stages: inflammation, proliferation and remodeling. Plays an important role in angiogenesis and blood vessel development. Involved in fibrotic processes, in which transformation of interstitial fibroblasts into myofibroblasts plus collagen deposition occurs. The CUB domain has mitogenic activity in coronary artery smooth muscle cells, suggesting a role beyond the maintenance of the latency of the PDGF domain. In the nucleus, PDGFC seems to have additional function. In Homo sapiens (Human), this protein is Platelet-derived growth factor C (PDGFC).